The following is a 66-amino-acid chain: Large ribosomal subunit protein bL31 (66 aa).

Zn(2+)-binding residues include cysteine 16, cysteine 18, cysteine 36, and cysteine 39.

Belongs to the bacterial ribosomal protein bL31 family. Type A subfamily. As to quaternary structure, part of the 50S ribosomal subunit. It depends on Zn(2+) as a cofactor.

Its function is as follows. Binds the 23S rRNA. In Natranaerobius thermophilus (strain ATCC BAA-1301 / DSM 18059 / JW/NM-WN-LF), this protein is Large ribosomal subunit protein bL31.